Reading from the N-terminus, the 437-residue chain is MKAFRSLRILISISRTTTKTTPRNPHQAQNFLRRFYSAQPNLDEPTSINEDGSSSDSVFDSSQYPIDDSNVDSVKKPKEATWDKGYRERVNKAFFGNLTEKGKVKVAEEESSEDDEDSVDRSRILAKALLEAALESPDEELGEGEVREEDQKSLNVGIIGPPNAGKSSLTNFMVGTKVAAASRKTNTTTHEVLGVLTKGDTQVCFFDTPGLMLKKSGYGYKDIKARVQNAWTSVDLFDVLIVMFDVHRHLMSPDSRVVRLIKYMGEEENPKQKRVLCMNKVDLVEKKKDLLKVAEEFQDLPAYERYFMISGLKGSGVKDLSQYLMDQAVKKPWEEDAFTMSEEVLKNISLEVVRERLLDHVHQEIPYGLEHRLVDWKELRDGSLRIEQHLITPKLSQRKILVGKGGCKIGRIGIEANEELRRIMNRKVHLILQVKLK.

Polar residues predominate over residues 39 to 50 (QPNLDEPTSINE). Residues 39–65 (QPNLDEPTSINEDGSSSDSVFDSSQYP) form a disordered region. Residues 51-62 (DGSSSDSVFDSS) are compositionally biased toward low complexity. Residues S111 and S112 each carry the phosphoserine modification. The 182-residue stretch at 152 to 333 (KSLNVGIIGP…LMDQAVKKPW (182 aa)) folds into the Era-type G domain. The tract at residues 160–167 (GPPNAGKS) is G1. Position 160 to 167 (160 to 167 (GPPNAGKS)) interacts with GTP. Positions 186-190 (NTTTH) are G2. The G3 stretch occupies residues 207 to 210 (DTPG). GTP is bound by residues 207–211 (DTPGL) and 279–282 (NKVD). Residues 279–282 (NKVD) form a G4 region. The interval 309 to 311 (ISG) is G5. The KH type-2 domain maps to 361–437 (VHQEIPYGLE…VHLILQVKLK (77 aa)).

Belongs to the TRAFAC class TrmE-Era-EngA-EngB-Septin-like GTPase superfamily. Era GTPase family.

Its function is as follows. Has a crucial role in plant growth and development, possibly by influencing mitochondrial division. The sequence is that of GTP-binding protein ERG (ERG) from Arabidopsis thaliana (Mouse-ear cress).